The following is a 51-amino-acid chain: ATP synthase protein 8 (51 aa).

A helical transmembrane segment spans residues 7 to 27 (LNWAMMTIMFSLSLLVSMIIL).

It belongs to the ATPase protein 8 family. As to quaternary structure, F-type ATPases have 2 components, CF(1) - the catalytic core - and CF(0) - the membrane proton channel.

The protein resides in the mitochondrion membrane. Functionally, mitochondrial membrane ATP synthase (F(1)F(0) ATP synthase or Complex V) produces ATP from ADP in the presence of a proton gradient across the membrane which is generated by electron transport complexes of the respiratory chain. F-type ATPases consist of two structural domains, F(1) - containing the extramembraneous catalytic core and F(0) - containing the membrane proton channel, linked together by a central stalk and a peripheral stalk. During catalysis, ATP synthesis in the catalytic domain of F(1) is coupled via a rotary mechanism of the central stalk subunits to proton translocation. Part of the complex F(0) domain. Minor subunit located with subunit a in the membrane. The chain is ATP synthase protein 8 (MT-ATP8) from Limulus polyphemus (Atlantic horseshoe crab).